The primary structure comprises 81 residues: Photosystem I iron-sulfur center (81 aa).

4Fe-4S ferredoxin-type domains lie at 2-31 (AHSV…MVPW) and 39-68 (IASA…VRVY). [4Fe-4S] cluster contacts are provided by cysteine 11, cysteine 14, cysteine 17, cysteine 21, cysteine 48, cysteine 51, cysteine 54, and cysteine 58.

The eukaryotic PSI reaction center is composed of at least 11 subunits. The cofactor is [4Fe-4S] cluster.

The protein resides in the plastid. The protein localises to the chloroplast thylakoid membrane. It carries out the reaction reduced [plastocyanin] + hnu + oxidized [2Fe-2S]-[ferredoxin] = oxidized [plastocyanin] + reduced [2Fe-2S]-[ferredoxin]. Apoprotein for the two 4Fe-4S centers FA and FB of photosystem I (PSI); essential for photochemical activity. FB is the terminal electron acceptor of PSI, donating electrons to ferredoxin. The C-terminus interacts with PsaA/B/D and helps assemble the protein into the PSI complex. Required for binding of PsaD and PsaE to PSI. PSI is a plastocyanin-ferredoxin oxidoreductase, converting photonic excitation into a charge separation, which transfers an electron from the donor P700 chlorophyll pair to the spectroscopically characterized acceptors A0, A1, FX, FA and FB in turn. This is Photosystem I iron-sulfur center from Gnetum gnemon (Spanish joint-fir).